Consider the following 95-residue polypeptide: Large ribosomal subunit protein uL23 (95 aa).

It belongs to the universal ribosomal protein uL23 family. As to quaternary structure, part of the 50S ribosomal subunit. Contacts protein L29 and trigger factor when it is bound to the ribosome.

Its function is as follows. One of the early assembly protein it binds 23S rRNA. One of the proteins that surrounds the polypeptide exit tunnel on the outside of the subunit. Forms the main docking site for trigger factor binding to the ribosome. This chain is Large ribosomal subunit protein uL23, found in Deinococcus radiodurans (strain ATCC 13939 / DSM 20539 / JCM 16871 / CCUG 27074 / LMG 4051 / NBRC 15346 / NCIMB 9279 / VKM B-1422 / R1).